The chain runs to 58 residues: Probable ferredoxin (58 aa).

4Fe-4S ferredoxin-type domains follow at residues 2–30 and 31–58; these read VAKV…LNDD and GIAT…ITIE. Positions 10, 13, 16, 20, 40, 43, 46, and 50 each coordinate [4Fe-4S] cluster.

[4Fe-4S] cluster serves as cofactor.

Ferredoxins are iron-sulfur proteins that transfer electrons in a wide variety of metabolic reactions. This chain is Probable ferredoxin, found in Methanosarcina thermophila.